The sequence spans 529 residues: GMP synthase [glutamine-hydrolyzing] (529 aa).

The 203-residue stretch at 9-211 folds into the Glutamine amidotransferase type-1 domain; it reads RILILDFGSQ…VKDICGCECL (203 aa). Cys86 (nucleophile) is an active-site residue. Active-site residues include His185 and Glu187. One can recognise a GMPS ATP-PPase domain in the interval 212–404; that stretch reads WTPATIIDDA…LGLPYDMLYR (193 aa). 239–245 is an ATP binding site; it reads SGGVDSS.

As to quaternary structure, homodimer.

The catalysed reaction is XMP + L-glutamine + ATP + H2O = GMP + L-glutamate + AMP + diphosphate + 2 H(+). It functions in the pathway purine metabolism; GMP biosynthesis; GMP from XMP (L-Gln route): step 1/1. Its function is as follows. Catalyzes the synthesis of GMP from XMP. This chain is GMP synthase [glutamine-hydrolyzing], found in Aeromonas hydrophila subsp. hydrophila (strain ATCC 7966 / DSM 30187 / BCRC 13018 / CCUG 14551 / JCM 1027 / KCTC 2358 / NCIMB 9240 / NCTC 8049).